The chain runs to 119 residues: MMNKKDARLRRARQTRAKIAEMKVNRLTVFRTNSHIYAQVFSECGTKVLASASTAEVEVRKELDGKGATAAAATVVGKRIAEKAKAAGVETVAFDRAGFRFHGRVKALADAAREAGLKF.

This sequence belongs to the universal ribosomal protein uL18 family. Part of the 50S ribosomal subunit; part of the 5S rRNA/L5/L18/L25 subcomplex. Contacts the 5S and 23S rRNAs.

In terms of biological role, this is one of the proteins that bind and probably mediate the attachment of the 5S RNA into the large ribosomal subunit, where it forms part of the central protuberance. The protein is Large ribosomal subunit protein uL18 of Cupriavidus necator (strain ATCC 17699 / DSM 428 / KCTC 22496 / NCIMB 10442 / H16 / Stanier 337) (Ralstonia eutropha).